The sequence spans 383 residues: 2-aminoethylphosphonate--pyruvate transaminase (383 aa).

Lysine 192 carries the N6-(pyridoxal phosphate)lysine modification.

This sequence belongs to the class-V pyridoxal-phosphate-dependent aminotransferase family. PhnW subfamily. Homodimer. Pyridoxal 5'-phosphate is required as a cofactor.

It catalyses the reaction (2-aminoethyl)phosphonate + pyruvate = phosphonoacetaldehyde + L-alanine. Functionally, involved in phosphonate degradation. This Rhizobium meliloti (strain 1021) (Ensifer meliloti) protein is 2-aminoethylphosphonate--pyruvate transaminase.